Here is a 144-residue protein sequence, read N- to C-terminus: 3-hydroxyacyl-[acyl-carrier-protein] dehydratase FabZ (144 aa).

The active site involves His-47.

The protein belongs to the thioester dehydratase family. FabZ subfamily.

It is found in the cytoplasm. It catalyses the reaction a (3R)-hydroxyacyl-[ACP] = a (2E)-enoyl-[ACP] + H2O. Involved in unsaturated fatty acids biosynthesis. Catalyzes the dehydration of short chain beta-hydroxyacyl-ACPs and long chain saturated and unsaturated beta-hydroxyacyl-ACPs. The sequence is that of 3-hydroxyacyl-[acyl-carrier-protein] dehydratase FabZ from Dechloromonas aromatica (strain RCB).